A 537-amino-acid polypeptide reads, in one-letter code: CTP synthase (537 aa).

Residues 1 to 265 (MTKFIFVTGG…GKYLIKRLKL (265 aa)) form an amidoligase domain region. Ser13 contributes to the CTP binding site. Ser13 provides a ligand contact to UTP. ATP is bound at residue 14–19 (GLGKGI). Tyr54 lines the L-glutamine pocket. Residue Asp71 participates in ATP binding. Mg(2+)-binding residues include Asp71 and Glu139. Residues 146-148 (DIE), 186-191 (KTKPTQ), and Lys222 contribute to the CTP site. Residues 186–191 (KTKPTQ) and Lys222 each bind UTP. In terms of domain architecture, Glutamine amidotransferase type-1 spans 290 to 532 (EIAIVGKYVK…VRAAKEYKQE (243 aa)). Position 351 (Gly351) interacts with L-glutamine. The active-site Nucleophile; for glutamine hydrolysis is the Cys378. Residues 379–382 (FGFQ), Glu402, and Arg459 each bind L-glutamine. Catalysis depends on residues His505 and Glu507.

Belongs to the CTP synthase family. As to quaternary structure, homotetramer.

The enzyme catalyses UTP + L-glutamine + ATP + H2O = CTP + L-glutamate + ADP + phosphate + 2 H(+). It carries out the reaction L-glutamine + H2O = L-glutamate + NH4(+). It catalyses the reaction UTP + NH4(+) + ATP = CTP + ADP + phosphate + 2 H(+). It participates in pyrimidine metabolism; CTP biosynthesis via de novo pathway; CTP from UDP: step 2/2. With respect to regulation, allosterically activated by GTP, when glutamine is the substrate; GTP has no effect on the reaction when ammonia is the substrate. The allosteric effector GTP functions by stabilizing the protein conformation that binds the tetrahedral intermediate(s) formed during glutamine hydrolysis. Inhibited by the product CTP, via allosteric rather than competitive inhibition. In terms of biological role, catalyzes the ATP-dependent amination of UTP to CTP with either L-glutamine or ammonia as the source of nitrogen. Regulates intracellular CTP levels through interactions with the four ribonucleotide triphosphates. In Pyrococcus horikoshii (strain ATCC 700860 / DSM 12428 / JCM 9974 / NBRC 100139 / OT-3), this protein is CTP synthase.